The chain runs to 589 residues: Early growth response protein 4 (589 aa).

3 disordered regions span residues 29–101 (GSAL…HSRR), 383–411 (AEGL…ASTQ), and 436–466 (PGSS…GRRG). Residues 76–86 (PLPPASPPPAR) are compositionally biased toward pro residues. Over residues 92 to 101 (ARPRAPHSRR) the composition is skewed to basic residues. Residues 395–404 (GEGGSSGDGG) are compositionally biased toward gly residues. Residues 444 to 454 (PPVPPPPPTPF) are compositionally biased toward pro residues. C2H2-type zinc fingers lie at residues 483-507 (FACP…LRIH), 513-535 (FQCR…VRTH), and 541-563 (FACD…SKVH).

This sequence belongs to the EGR C2H2-type zinc-finger protein family.

The protein localises to the nucleus. In terms of biological role, transcriptional regulator. Recognizes and binds to the DNA sequence 5'-GCGGGGGCG-3' (GSG). Activates the transcription of target genes whose products are required for mitogenesis and differentiation. The chain is Early growth response protein 4 (EGR4) from Homo sapiens (Human).